Here is a 150-residue protein sequence, read N- to C-terminus: uncharacterized protein (150 aa).

The next 3 helical transmembrane spans lie at 48–68 (LFLLLFVIPTITLTTLGCFLF), 89–109 (VFIFIDVFGLVVSVLFGYLLP), and 123–143 (REVFLSLAMIVIFANSVIFTL).

It to M.pneumoniae MPN_085 central region.

It localises to the cell membrane. This is an uncharacterized protein from Mycoplasma pneumoniae (strain ATCC 29342 / M129 / Subtype 1) (Mycoplasmoides pneumoniae).